Here is a 485-residue protein sequence, read N- to C-terminus: Cysteine--tRNA ligase (485 aa).

Residue cysteine 27 coordinates Zn(2+). The short motif at 29-39 (ITAYDLCHIGH) is the 'HIGH' region element. Residues cysteine 208, histidine 233, and glutamate 237 each contribute to the Zn(2+) site. The short motif at 265-269 (KMSKS) is the 'KMSKS' region element. Lysine 268 serves as a coordination point for ATP.

It belongs to the class-I aminoacyl-tRNA synthetase family. In terms of assembly, monomer. Requires Zn(2+) as cofactor.

The protein resides in the cytoplasm. The enzyme catalyses tRNA(Cys) + L-cysteine + ATP = L-cysteinyl-tRNA(Cys) + AMP + diphosphate. The protein is Cysteine--tRNA ligase of Nitratidesulfovibrio vulgaris (strain DSM 19637 / Miyazaki F) (Desulfovibrio vulgaris).